Consider the following 377-residue polypeptide: Odorant receptor 30a (377 aa).

Residues methionine 1 to arginine 34 are Cytoplasmic-facing. Residues tyrosine 35–serine 55 form a helical membrane-spanning segment. The Extracellular segment spans residues threonine 56–asparagine 65. A helical membrane pass occupies residues valine 66–arginine 86. The Cytoplasmic segment spans residues phenylalanine 87–arginine 127. The chain crosses the membrane as a helical span at residues isoleucine 128–serine 148. Topologically, residues glutamate 149 to glutamate 172 are extracellular. Residues isoleucine 173–threonine 193 form a helical membrane-spanning segment. The Cytoplasmic portion of the chain corresponds to asparagine 194 to histidine 254. A helical transmembrane segment spans residues leucine 255–alanine 275. The Extracellular segment spans residues glutamine 276–glutamine 280. A helical transmembrane segment spans residues threonine 281–valine 301. The Cytoplasmic portion of the chain corresponds to alanine 302–alanine 344. The helical transmembrane segment at isoleucine 345–isoleucine 365 threads the bilayer. The Extracellular segment spans residues tyrosine 366 to glycine 377.

This sequence belongs to the insect chemoreceptor superfamily. Heteromeric odorant receptor channel (TC 1.A.69) family. Or30a subfamily. Interacts with Orco. Complexes exist early in the endomembrane system in olfactory sensory neurons (OSNs), coupling these complexes to the conserved ciliary trafficking pathway.

The protein localises to the cell membrane. In terms of biological role, odorant receptor which mediates acceptance or avoidance behavior, depending on its substrates. The odorant receptor repertoire encodes a large collection of odor stimuli that vary widely in identity, intensity, and duration. May form a complex with Orco to form odorant-sensing units, providing sensitive and prolonged odorant signaling and calcium permeability. Involved in the behavioral responses to propyl acetate and anisole. This is Odorant receptor 30a (Or30a) from Drosophila melanogaster (Fruit fly).